The primary structure comprises 347 residues: NADH-quinone oxidoreductase subunit H 1 (347 aa).

9 helical membrane-spanning segments follow: residues 13 to 33 (IIMIGQSLLLLVCLLVFIAYV), 50 to 70 (PNVVGPFGLFQSFADLLKFVF), 82 to 102 (AVFLLAPLVTVLLALSTWAVV), 115 to 135 (VGILYIFAISSLEVYGIIMGG), 161 to 181 (IGFVIVTVLLCVGSLNLTDIV), 198 to 218 (FLDWHWLSLFPMFIVFFISAL), 263 to 283 (CALTTILFLGGWLPPVDIWIL), 286 to 306 (VPGIIWFTLKACLVFFMFAMV), and 321 to 341 (LGWKVFLPLSLAMVIIVAFVL).

Belongs to the complex I subunit 1 family. In terms of assembly, NDH-1 is composed of 14 different subunits. Subunits NuoA, H, J, K, L, M, N constitute the membrane sector of the complex.

The protein resides in the cell inner membrane. It catalyses the reaction a quinone + NADH + 5 H(+)(in) = a quinol + NAD(+) + 4 H(+)(out). Functionally, NDH-1 shuttles electrons from NADH, via FMN and iron-sulfur (Fe-S) centers, to quinones in the respiratory chain. The immediate electron acceptor for the enzyme in this species is believed to be ubiquinone. Couples the redox reaction to proton translocation (for every two electrons transferred, four hydrogen ions are translocated across the cytoplasmic membrane), and thus conserves the redox energy in a proton gradient. This subunit may bind ubiquinone. The chain is NADH-quinone oxidoreductase subunit H 1 from Rhizobium etli (strain ATCC 51251 / DSM 11541 / JCM 21823 / NBRC 15573 / CFN 42).